The primary structure comprises 388 residues: Methylthioribose-1-phosphate isomerase (388 aa).

The active-site Proton donor is Asp-252.

The protein belongs to the eIF-2B alpha/beta/delta subunits family. MtnA subfamily.

It localises to the cytoplasm. The protein resides in the nucleus. It carries out the reaction 5-(methylsulfanyl)-alpha-D-ribose 1-phosphate = 5-(methylsulfanyl)-D-ribulose 1-phosphate. It participates in amino-acid biosynthesis; L-methionine biosynthesis via salvage pathway; L-methionine from S-methyl-5-thio-alpha-D-ribose 1-phosphate: step 1/6. Catalyzes the interconversion of methylthioribose-1-phosphate (MTR-1-P) into methylthioribulose-1-phosphate (MTRu-1-P). The polypeptide is Methylthioribose-1-phosphate isomerase (Verticillium alfalfae (strain VaMs.102 / ATCC MYA-4576 / FGSC 10136) (Verticillium wilt of alfalfa)).